A 76-amino-acid polypeptide reads, in one-letter code: UPF0291 protein BA_1897/GBAA_1897/BAS1759 (76 aa).

The protein belongs to the UPF0291 family.

It localises to the cytoplasm. The protein is UPF0291 protein BA_1897/GBAA_1897/BAS1759 of Bacillus anthracis.